A 61-amino-acid chain; its full sequence is Photosystem II reaction center protein K (61 aa).

A propeptide spanning residues 1–24 (MLNIFSLICICLNSALYSSNFFFA) is cleaved from the precursor. Residues 40 to 60 (MPVIPLFFFLLAFVWQAAVSF) form a helical membrane-spanning segment.

It belongs to the PsbK family. As to quaternary structure, PSII is composed of 1 copy each of membrane proteins PsbA, PsbB, PsbC, PsbD, PsbE, PsbF, PsbH, PsbI, PsbJ, PsbK, PsbL, PsbM, PsbT, PsbX, PsbY, PsbZ, Psb30/Ycf12, at least 3 peripheral proteins of the oxygen-evolving complex and a large number of cofactors. It forms dimeric complexes.

It localises to the plastid. Its subcellular location is the chloroplast thylakoid membrane. Its function is as follows. One of the components of the core complex of photosystem II (PSII). PSII is a light-driven water:plastoquinone oxidoreductase that uses light energy to abstract electrons from H(2)O, generating O(2) and a proton gradient subsequently used for ATP formation. It consists of a core antenna complex that captures photons, and an electron transfer chain that converts photonic excitation into a charge separation. The polypeptide is Photosystem II reaction center protein K (Vitis vinifera (Grape)).